The following is a 385-amino-acid chain: GDP-mannose-dependent alpha-(1-6)-phosphatidylinositol monomannoside mannosyltransferase (385 aa).

4 residues coordinate GDP-alpha-D-mannose: Arg-205, Lys-210, Val-262, and Glu-299.

The protein belongs to the glycosyltransferase group 1 family. Glycosyltransferase 4 subfamily.

It catalyses the reaction a 1,2-diacyl-sn-glycero-3-phospho-[alpha-D-mannopyranosyl-(1&lt;-&gt;6)-D-myo-inositol] + GDP-alpha-D-mannose = a 2,6-O-bis(alpha-D-mannopyranosyl)-1-phosphatidyl-1D-myo-inositol + GDP + H(+). The enzyme catalyses a 1,2-diacyl-sn-glycero-3-phospho-[alpha-D-6-acyl-mannopyranosyl-(1&lt;-&gt;6)-D-myo-inositol] + GDP-alpha-D-mannose = a 2-O-(alpha-D-mannosyl)-6-O-(6-O-acyl-alpha-D-mannosyl)-1-phosphatidyl-1D-myo-inositol + GDP + H(+). It functions in the pathway phospholipid metabolism; phosphatidylinositol metabolism. Involved in the biosynthesis of phosphatidyl-myo-inositol mannosides (PIM) which are early precursors in the biosynthesis of lipomannans (LM) and lipoarabinomannans (LAM). Catalyzes the addition of a mannosyl residue from GDP-D-mannose (GDP-Man) to the position 6 of a phosphatidyl-myo-inositol bearing an alpha-1,2-linked mannose residue (PIM1) to generate phosphatidyl-myo-inositol bearing alpha-1,2- and alpha-1,6-linked mannose residues (Ac1PIM2). PimB also catalyzes the addition of a mannosyl residue from GDP-Man to the position 6 of phosphatidyl-myo-inositol bearing an acylated alpha-1,2-linked mannose residue (Ac1PIM1) to generate monoacylated phosphatidyl-myo-inositol bearing alpha-1,2- and alpha-1,6-linked mannose residues (Ac1PIM2). The addition of the second mannosyl residue by PimB preferentially occurs before the acylation of the mannosyl residue transferred by PimA. Also able to transfer a mannosyl residue from GDP-Man to the position 6 of a phosphatidyl-myo-inositol (PI), but this reaction is very slow. In Mycobacterium tuberculosis (strain CDC 1551 / Oshkosh), this protein is GDP-mannose-dependent alpha-(1-6)-phosphatidylinositol monomannoside mannosyltransferase.